A 230-amino-acid polypeptide reads, in one-letter code: Enolase-phosphatase E1 (230 aa).

This sequence belongs to the HAD-like hydrolase superfamily. MasA/MtnC family. In terms of assembly, monomer. Mg(2+) is required as a cofactor.

The catalysed reaction is 5-methylsulfanyl-2,3-dioxopentyl phosphate + H2O = 1,2-dihydroxy-5-(methylsulfanyl)pent-1-en-3-one + phosphate. It functions in the pathway amino-acid biosynthesis; L-methionine biosynthesis via salvage pathway; L-methionine from S-methyl-5-thio-alpha-D-ribose 1-phosphate: step 3/6. The protein operates within amino-acid biosynthesis; L-methionine biosynthesis via salvage pathway; L-methionine from S-methyl-5-thio-alpha-D-ribose 1-phosphate: step 4/6. Bifunctional enzyme that catalyzes the enolization of 2,3-diketo-5-methylthiopentyl-1-phosphate (DK-MTP-1-P) into the intermediate 2-hydroxy-3-keto-5-methylthiopentenyl-1-phosphate (HK-MTPenyl-1-P), which is then dephosphorylated to form the acireductone 1,2-dihydroxy-3-keto-5-methylthiopentene (DHK-MTPene). This is Enolase-phosphatase E1 from Bradyrhizobium sp. (strain BTAi1 / ATCC BAA-1182).